The following is a 493-amino-acid chain: Cysteine--tRNA ligase (493 aa).

Position 41 (C41) interacts with Zn(2+). The 'HIGH' region motif lies at 43 to 53 (PTVYNYPHIGN). Zn(2+)-binding residues include C231, H256, and E260. The short motif at 296 to 300 (KMSKS) is the 'KMSKS' region element. K299 serves as a coordination point for ATP.

It belongs to the class-I aminoacyl-tRNA synthetase family. Monomer. It depends on Zn(2+) as a cofactor.

It is found in the cytoplasm. The catalysed reaction is tRNA(Cys) + L-cysteine + ATP = L-cysteinyl-tRNA(Cys) + AMP + diphosphate. This is Cysteine--tRNA ligase from Novosphingobium aromaticivorans (strain ATCC 700278 / DSM 12444 / CCUG 56034 / CIP 105152 / NBRC 16084 / F199).